A 581-amino-acid chain; its full sequence is Arginine--tRNA ligase (581 aa).

The short motif at 122-132 (PNVAKPMHVGH) is the 'HIGH' region element.

Belongs to the class-I aminoacyl-tRNA synthetase family. Monomer.

The protein resides in the cytoplasm. The enzyme catalyses tRNA(Arg) + L-arginine + ATP = L-arginyl-tRNA(Arg) + AMP + diphosphate. The polypeptide is Arginine--tRNA ligase (Francisella tularensis subsp. holarctica (strain FTNF002-00 / FTA)).